A 358-amino-acid polypeptide reads, in one-letter code: Peptide chain release factor 1 (358 aa).

Q233 bears the N5-methylglutamine mark.

Belongs to the prokaryotic/mitochondrial release factor family. Methylated by PrmC. Methylation increases the termination efficiency of RF1.

It localises to the cytoplasm. Peptide chain release factor 1 directs the termination of translation in response to the peptide chain termination codons UAG and UAA. The polypeptide is Peptide chain release factor 1 (Clostridium botulinum (strain 657 / Type Ba4)).